The chain runs to 442 residues: Tubulin beta chain (442 aa).

Residues Gln-11, Glu-67, Ser-136, Gly-140, Thr-141, Gly-142, and Asn-202 each coordinate GTP. Glu-67 lines the Mg(2+) pocket.

The protein belongs to the tubulin family. As to quaternary structure, dimer of alpha and beta chains. A typical microtubule is a hollow water-filled tube with an outer diameter of 25 nm and an inner diameter of 15 nM. Alpha-beta heterodimers associate head-to-tail to form protofilaments running lengthwise along the microtubule wall with the beta-tubulin subunit facing the microtubule plus end conferring a structural polarity. Microtubules usually have 13 protofilaments but different protofilament numbers can be found in some organisms and specialized cells. Mg(2+) serves as cofactor.

The protein resides in the cytoplasm. It localises to the cytoskeleton. Its function is as follows. Tubulin is the major constituent of microtubules, a cylinder consisting of laterally associated linear protofilaments composed of alpha- and beta-tubulin heterodimers. Microtubules grow by the addition of GTP-tubulin dimers to the microtubule end, where a stabilizing cap forms. Below the cap, tubulin dimers are in GDP-bound state, owing to GTPase activity of alpha-tubulin. This chain is Tubulin beta chain (TUBB), found in Euglena gracilis.